The following is a 1534-amino-acid chain: Slit homolog 1 protein (1534 aa).

An N-terminal signal peptide occupies residues 1–33; the sequence is MALTPGWGSSAGPVRPELWLLLWAAAWRLGASA. Residues 34–61 enclose the LRRNT domain; that stretch reads CPALCTCTGTTVDCHGTGLQAIPKNIPR. LRR repeat units follow at residues 62–83, 86–107, 110–131, 134–155, 158–179, and 182–203; these read NTERLELNGNNITRIHKNDFAG, QLRVLQLMENQIGAVERGAFDD, ELERLRLNRNQLHMLPELLFQN, ALSRLDLSENAIQAIPRKAFRG, DLKNLQLDKNQISCIEEGAFRA, and GLEVLTLNNNNITTIPVSSFNH. N-linked (GlcNAc...) asparagine glycosylation is present at Asn72. Residue Asn192 is glycosylated (N-linked (GlcNAc...) asparagine). Residues 215 to 265 form the LRRCT 1 domain; that stretch reads NHLFCDCHLAWLSQWLRQRPTIGLFTQCSGPASLRGLNVAEVQKSEFSCSG. Residues 273–309 form the LRRNT 2 domain; it reads PTCTLSSGSCPAMCTCSNGIVDCRGKGLTAIPANLPE. Cysteines 286 and 295 form a disulfide. 5 LRR repeats span residues 310-331, 334-355, 358-379, 382-403, and 406-427; these read TMTEIRLELNGIKSIPPGAFSP, KLRRIDLSNNQIAEIAPDAFQG, SLNSLVLYGNKITDLPRGVFGG, TLQLLLLNANKINCIRPDAFQD, and NLSLLSLYDNKIQSLAKGTFTS. Asn406 carries an N-linked (GlcNAc...) asparagine glycan. In terms of domain architecture, LRRCT 2 spans 439–489; it reads NPFICDCNLKWLADFLRTNPIETSGARCASPRRLANKRIGQIKSKKFRCSA. Disulfide bonds link Cys443–Cys466, Cys445–Cys487, Cys513–Cys519, and Cys517–Cys526. The region spanning 504 to 540 is the LRRNT 3 domain; it reads NSECNSDVVCPHKCRCEANVVECSSLKLTKIPERIPQ. 5 LRR repeats span residues 541-562, 566-587, 590-611, 614-635, and 638-659; these read STAELRLNNNEISILEATGMFK, HLKKINLSNNKVSEIEDGAFEG, SVSELHLTANQLESIRSGMFRG, GLRTLMLRNNRISCIHNDSFTG, and NVRLLSLYDNQITTVSPGAFDT. An N-linked (GlcNAc...) asparagine glycan is attached at Asn571. Residue Asn630 is glycosylated (N-linked (GlcNAc...) asparagine). An LRRCT 3 domain is found at 671 to 721; sequence NPFNCNCQLAWLGGWLRKRKIVTGNPRCQNPDFLRQIPLQDVAFPDFRCEE. Intrachain disulfides connect Cys675–Cys698 and Cys677–Cys719. Residues 725–761 form the LRRNT 4 domain; the sequence is EGGCLPRPQCPQECACLDTVVRCSNKHLRALPKGIPK. 3 N-linked (GlcNAc...) asparagine glycosylation sites follow: Asn762, Asn801, and Asn806. LRR repeat units follow at residues 762–783, 785–806, 809–830, and 833–854; these read NVTELYLDGNQFTLVPGQLSTF, YLQLVDLSNNKISSLSNSSFTN, QLTTLILSYNALQCIPPLAFQG, and SLRLLSLHGNDISTLQEGIFAD. Positions 866 to 916 constitute an LRRCT 4 domain; that stretch reads NPLYCDCHLRWLSSWVKTGYKEPGIARCAGPQDMEGKLLLTTPAKKFECQG. EGF-like domains are found at residues 927-962, 964-1003, 1005-1041, 1043-1081, 1083-1119, and 1127-1163; these read DLCLSSPCQNQGTCHNDPLEVYRCACPSGYKGRDCE, SLDSCSSGPCENGGTCHAQEGEDAPFTCSCPTGFEGPTCG, NTDDCVDHACANGGVCVDGVGNYTCQCPLQYEGKACE, LVDLCSPDLNPCQHEAQCVGTPDGPRCECMPGYAGDNCS, NQDDCRDHRCQNGAQCMDEVNSYSCLCAEGYSGQLCE, and PKSPCEGTECQNGANCVDQGNRPVCQCLPGFGGPECE. 18 disulfides stabilise this stretch: Cys929–Cys940, Cys934–Cys950, Cys952–Cys961, Cys968–Cys979, Cys973–Cys991, Cys993–Cys1002, Cys1009–Cys1020, Cys1014–Cys1029, Cys1031–Cys1040, Cys1047–Cys1060, Cys1054–Cys1069, Cys1071–Cys1080, Cys1087–Cys1098, Cys1092–Cys1107, Cys1109–Cys1118, Cys1131–Cys1142, Cys1136–Cys1151, and Cys1153–Cys1162. The N-linked (GlcNAc...) asparagine glycan is linked to Asn1026. A glycan (N-linked (GlcNAc...) asparagine) is linked at Asn1079. Residues 1166–1339 enclose the Laminin G-like domain; sequence LSVNFVDRDT…QMKPGVVPGC (174 aa). Asn1189, Asn1259, and Asn1306 each carry an N-linked (GlcNAc...) asparagine glycan. 14 disulfides stabilise this stretch: Cys1313–Cys1339, Cys1342–Cys1352, Cys1347–Cys1362, Cys1364–Cys1373, Cys1381–Cys1391, Cys1386–Cys1401, Cys1403–Cys1412, Cys1422–Cys1432, Cys1427–Cys1442, Cys1444–Cys1453, Cys1459–Cys1498, Cys1477–Cys1512, Cys1488–Cys1528, and Cys1492–Cys1530. 3 consecutive EGF-like domains span residues 1340 to 1374, 1377 to 1413, and 1418 to 1454; these read EPCRKLYCLHGICQPNATPGPMCHCEAGWVGLHCD, ADGPCHGHKCVHGQCVPLDALSYSCQCQDGYSGALCN, and LAEPCRGLQCLHGHCQASGTKGAHCVCDPGFSGELCE. A CTCK domain is found at 1459 to 1534; that stretch reads CRGDPVRDFH…PTKCGCALCA (76 aa).

In terms of assembly, interacts with ROBO1 and GREM1. As to expression, predominantly expressed in adult forebrain. Expressed in fetal brain, lung and kidney.

The protein resides in the secreted. Functionally, thought to act as molecular guidance cue in cellular migration, and function appears to be mediated by interaction with roundabout homolog receptors. During neural development involved in axonal navigation at the ventral midline of the neural tube and projection of axons to different regions. SLIT1 and SLIT2 together seem to be essential for midline guidance in the forebrain by acting as repulsive signal preventing inappropriate midline crossing by axons projecting from the olfactory bulb. In Homo sapiens (Human), this protein is Slit homolog 1 protein (SLIT1).